Consider the following 498-residue polypeptide: ATP synthase subunit beta, chloroplastic (498 aa).

The residue at position 6 (threonine 6) is a Phosphothreonine. The residue at position 13 (serine 13) is a Phosphoserine. Position 172–179 (172–179 (GGAGVGKT)) interacts with ATP.

It belongs to the ATPase alpha/beta chains family. F-type ATPases have 2 components, CF(1) - the catalytic core - and CF(0) - the membrane proton channel. CF(1) has five subunits: alpha(3), beta(3), gamma(1), delta(1), epsilon(1). CF(0) has four main subunits: a(1), b(1), b'(1) and c(9-12).

The protein localises to the plastid. It is found in the chloroplast thylakoid membrane. The enzyme catalyses ATP + H2O + 4 H(+)(in) = ADP + phosphate + 5 H(+)(out). In terms of biological role, produces ATP from ADP in the presence of a proton gradient across the membrane. The catalytic sites are hosted primarily by the beta subunits. This chain is ATP synthase subunit beta, chloroplastic, found in Crucihimalaya wallichii (Rock-cress).